The chain runs to 134 residues: Small ribosomal subunit protein uS8 (134 aa).

This sequence belongs to the universal ribosomal protein uS8 family. As to quaternary structure, part of the 30S ribosomal subunit. Contacts proteins S5 and S12.

Functionally, one of the primary rRNA binding proteins, it binds directly to 16S rRNA central domain where it helps coordinate assembly of the platform of the 30S subunit. This Sphingopyxis alaskensis (strain DSM 13593 / LMG 18877 / RB2256) (Sphingomonas alaskensis) protein is Small ribosomal subunit protein uS8.